The following is a 240-amino-acid chain: U1 small nuclear ribonucleoprotein C (240 aa).

The segment at 4 to 36 (YYCEYCDIYLTHSSPVGRRQHIQGRKHISAKIE) adopts a Matrin-type zinc-finger fold. Disordered regions lie at residues 86–122 (GMKH…SKYH) and 175–240 (IDSD…SVDA). 2 stretches are compositionally biased toward basic and acidic residues: residues 178–194 (DPVK…DNAI) and 203–219 (DQGD…HADH). Polar residues predominate over residues 226–240 (TDGTANGNDQVSVDA).

This sequence belongs to the U1 small nuclear ribonucleoprotein C family. As to quaternary structure, U1 snRNP is composed of the 7 core Sm proteins B/B', D1, D2, D3, E, F and G that assemble in a heptameric protein ring on the Sm site of the small nuclear RNA to form the core snRNP, and at least 3 U1 snRNP-specific proteins U1-70K, U1-A and U1-C. U1-C interacts with U1 snRNA and the 5' splice-site region of the pre-mRNA.

It is found in the nucleus. Its function is as follows. Component of the spliceosomal U1 snRNP, which is essential for recognition of the pre-mRNA 5' splice-site and the subsequent assembly of the spliceosome. U1-C is directly involved in initial 5' splice-site recognition for both constitutive and regulated alternative splicing. The interaction with the 5' splice-site seems to precede base-pairing between the pre-mRNA and the U1 snRNA. Stimulates commitment or early (E) complex formation by stabilizing the base pairing of the 5' end of the U1 snRNA and the 5' splice-site region. The chain is U1 small nuclear ribonucleoprotein C from Plasmodium vivax (strain Salvador I).